We begin with the raw amino-acid sequence, 149 residues long: Transcriptional repressor NrdR (149 aa).

A zinc finger spans residues 3 to 33 (CPFCSSEDTKVVDSRTTIDGSTKRRRECNNC). The ATP-cone domain occupies 48–138 (IYVVKKDNRR…VYKEFDDIKS (91 aa)).

It belongs to the NrdR family. Requires Zn(2+) as cofactor.

Its function is as follows. Negatively regulates transcription of bacterial ribonucleotide reductase nrd genes and operons by binding to NrdR-boxes. This is Transcriptional repressor NrdR from Fusobacterium nucleatum subsp. nucleatum (strain ATCC 25586 / DSM 15643 / BCRC 10681 / CIP 101130 / JCM 8532 / KCTC 2640 / LMG 13131 / VPI 4355).